Consider the following 466-residue polypeptide: tRNA dimethylallyltransferase 2 (466 aa).

Glycine 27–serine 34 lines the ATP pocket. A substrate-binding site is contributed by threonine 29–serine 34. The interval aspartate 52 to glutamine 55 is interaction with substrate tRNA. The segment at tryptophan 433 to asparagine 466 is disordered. Positions lysine 437–asparagine 451 are enriched in basic residues. Over residues lysine 456–asparagine 466 the composition is skewed to basic and acidic residues.

It belongs to the IPP transferase family. Mg(2+) is required as a cofactor. As to expression, expressed ubiquitously, with highest expression in proliferating tissues.

Its subcellular location is the cytoplasm. It catalyses the reaction adenosine(37) in tRNA + dimethylallyl diphosphate = N(6)-dimethylallyladenosine(37) in tRNA + diphosphate. In terms of biological role, catalyzes the transfer of a dimethylallyl group onto the adenine at position 37 in tRNAs that read codons beginning with uridine, leading to the formation of N6-(dimethylallyl)adenosine (i(6)A). Involved in the cis-type cytokinin biosynthesis. The chain is tRNA dimethylallyltransferase 2 (IPT2) from Arabidopsis thaliana (Mouse-ear cress).